The chain runs to 304 residues: Coenzyme PQQ synthesis protein B (304 aa).

It belongs to the PqqB family.

The protein operates within cofactor biosynthesis; pyrroloquinoline quinone biosynthesis. May be involved in the transport of PQQ or its precursor to the periplasm. The chain is Coenzyme PQQ synthesis protein B from Pseudomonas aeruginosa (strain ATCC 15692 / DSM 22644 / CIP 104116 / JCM 14847 / LMG 12228 / 1C / PRS 101 / PAO1).